A 778-amino-acid polypeptide reads, in one-letter code: uncharacterized protein (778 aa).

The PE domain occupies 1-92 (MSFVIAVPEA…GARSYVVAEA (92 aa)). Disordered stretches follow at residues 125–163 (ADGTGAPGGPGGLLLGNGGNGGSGAPGQPGGAGGDAGLI), 372–510 (TGLA…GDAF), and 718–778 (QGGL…GADG). Gly residues-rich tracts occupy residues 402-429 (NQTGGNGGPGPAGGVGEAGGVGGQGGLG), 436-510 (DGTG…GDAF), and 718-763 (QGGL…GSSG).

The protein belongs to the mycobacterial PE family. PGRS subfamily.

This is an uncharacterized protein from Mycobacterium tuberculosis (strain CDC 1551 / Oshkosh).